Consider the following 196-residue polypeptide: ATP-dependent Clp protease proteolytic subunit (196 aa).

The active-site Nucleophile is the serine 98. Residue histidine 123 is part of the active site.

The protein belongs to the peptidase S14 family. Fourteen ClpP subunits assemble into 2 heptameric rings which stack back to back to give a disk-like structure with a central cavity, resembling the structure of eukaryotic proteasomes.

It is found in the cytoplasm. The enzyme catalyses Hydrolysis of proteins to small peptides in the presence of ATP and magnesium. alpha-casein is the usual test substrate. In the absence of ATP, only oligopeptides shorter than five residues are hydrolyzed (such as succinyl-Leu-Tyr-|-NHMec, and Leu-Tyr-Leu-|-Tyr-Trp, in which cleavage of the -Tyr-|-Leu- and -Tyr-|-Trp bonds also occurs).. Cleaves peptides in various proteins in a process that requires ATP hydrolysis. Has a chymotrypsin-like activity. Plays a major role in the degradation of misfolded proteins. ClpXP is involved in the complete degradation of the Site-2 clipped anti-sigma-W factor RsiW. This results in the release of SigW and the transcription activation of the genes under the control of the sigma-W factor. In Geobacillus kaustophilus (strain HTA426), this protein is ATP-dependent Clp protease proteolytic subunit.